The primary structure comprises 78 residues: Large ribosomal subunit protein bL28 (78 aa).

A disordered region spans residues 1–21 (MSKVCQVTGKRPITGHNVSHA).

Belongs to the bacterial ribosomal protein bL28 family.

The chain is Large ribosomal subunit protein bL28 from Cellvibrio japonicus (strain Ueda107) (Pseudomonas fluorescens subsp. cellulosa).